Consider the following 155-residue polypeptide: 1,4-dihydroxy-2-naphthoyl-CoA hydrolase (155 aa).

The active site involves D22.

It belongs to the 4-hydroxybenzoyl-CoA thioesterase family. DHNA-CoA hydrolase subfamily.

It carries out the reaction 1,4-dihydroxy-2-naphthoyl-CoA + H2O = 1,4-dihydroxy-2-naphthoate + CoA + H(+). Its pathway is cofactor biosynthesis; phylloquinone biosynthesis. It participates in quinol/quinone metabolism; 1,4-dihydroxy-2-naphthoate biosynthesis; 1,4-dihydroxy-2-naphthoate from chorismate: step 7/7. Its function is as follows. Catalyzes the hydrolysis of 1,4-dihydroxy-2-naphthoyl-CoA (DHNA-CoA) to 1,4-dihydroxy-2-naphthoate (DHNA), a reaction involved in phylloquinone (vitamin K1) biosynthesis. This Prochlorococcus marinus (strain SARG / CCMP1375 / SS120) protein is 1,4-dihydroxy-2-naphthoyl-CoA hydrolase.